The sequence spans 248 residues: ATP synthase subunit a (248 aa).

Transmembrane regions (helical) follow at residues 31–51, 90–110, 129–149, 195–215, and 216–236; these read GQVLIASWIAIALILTVVLLG, VPYVGTLFLFIFVSNWMGNLF, INTTAGLALLTSVMYFVAGIS, VIAVLVLLVPLLIPVPVMILF, and LFTGAIQALIFSTLSAAYIGE.

This sequence belongs to the ATPase A chain family. In terms of assembly, F-type ATPases have 2 components, CF(1) - the catalytic core - and CF(0) - the membrane proton channel. CF(1) has five subunits: alpha(3), beta(3), gamma(1), delta(1), epsilon(1). CF(0) has four main subunits: a, b, b' and c.

The protein localises to the cellular thylakoid membrane. Functionally, key component of the proton channel; it plays a direct role in the translocation of protons across the membrane. This Synechococcus sp. (strain JA-3-3Ab) (Cyanobacteria bacterium Yellowstone A-Prime) protein is ATP synthase subunit a.